The sequence spans 125 residues: Large ribosomal subunit protein bL12 (125 aa).

This sequence belongs to the bacterial ribosomal protein bL12 family. In terms of assembly, homodimer. Part of the ribosomal stalk of the 50S ribosomal subunit. Forms a multimeric L10(L12)X complex, where L10 forms an elongated spine to which 2 to 4 L12 dimers bind in a sequential fashion. Binds GTP-bound translation factors.

Forms part of the ribosomal stalk which helps the ribosome interact with GTP-bound translation factors. Is thus essential for accurate translation. In Chelativorans sp. (strain BNC1), this protein is Large ribosomal subunit protein bL12.